Here is a 237-residue protein sequence, read N- to C-terminus: Phosphoribosylaminoimidazole-succinocarboxamide synthase (237 aa).

Belongs to the SAICAR synthetase family.

The catalysed reaction is 5-amino-1-(5-phospho-D-ribosyl)imidazole-4-carboxylate + L-aspartate + ATP = (2S)-2-[5-amino-1-(5-phospho-beta-D-ribosyl)imidazole-4-carboxamido]succinate + ADP + phosphate + 2 H(+). Its pathway is purine metabolism; IMP biosynthesis via de novo pathway; 5-amino-1-(5-phospho-D-ribosyl)imidazole-4-carboxamide from 5-amino-1-(5-phospho-D-ribosyl)imidazole-4-carboxylate: step 1/2. The protein is Phosphoribosylaminoimidazole-succinocarboxamide synthase of Campylobacter fetus subsp. fetus (strain 82-40).